A 1863-amino-acid chain; its full sequence is Calcineurin-binding protein 1 (1863 aa).

TPR repeat units follow at residues 30–65, 81–116, and 118–150; these read LSQT…ITNS, FLAL…DAKD, and VLWN…SPNN. The segment at 315–361 is disordered; that stretch reads ERESGGSVKEKEPVFSEEHPQERRSTRLERLRNQKPEKEGLEFDNSK. TPR repeat units lie at residues 543 to 576, 602 to 637, 866 to 900, 955 to 988, 990 to 1009, 1011 to 1031, 1143 to 1183, 1226 to 1263, 1264 to 1297, 1306 to 1339, 1377 to 1412, and 1508 to 1541; these read ARYF…LGRE, IHEI…LAPL, INSP…EKNE, QCFF…DYQT, EQCV…SSRT, LVKL…PPDD, FESW…SQRV, VPFY…RQDW, SHAF…NPSA, ASRL…KDTA, EGVW…LAQG, and NSLR…SMSR. Residues 894–923 show a composition bias toward basic and acidic residues; it reads VHVEKNENNKTESKKDGSEEQVGYREKEQS. The tract at residues 894-941 is disordered; it reads VHVEKNENNKTESKKDGSEEQVGYREKEQSEQQSKQIPEHTEEVAEEE. The tract at residues 1813 to 1840 is disordered; the sequence is KMKRGASTSSVVPSVQSGGTSEPEPAPK. Residues 1818-1832 show a composition bias toward polar residues; it reads ASTSSVVPSVQSGGT.

Component of the HIRA complex made of UBN1, UBN2, ASF1A, CABIN1 and HIRA. As to expression, expressed at low levels in seedlings.

It localises to the nucleus. May be required for replication-independent chromatin assembly. This is Calcineurin-binding protein 1 from Arabidopsis thaliana (Mouse-ear cress).